The primary structure comprises 270 residues: MATVPEPTSEMMSYYYSDNENDLFFEADGPRKMKCCFQDLNNSSLEDEGIQLHISHQLHNKSLKHFVSVVVALEKLKKVSLPCSQPLQDDDLKNIFCCIFEEEPIVCEVYDDDAFVCDAPLQSLDCKFRDISQKSLVLYNSCELRALHLNGSSVNQQAVFRMSFVQGDENSNKIPVALCIKEKNLYLSCVMKDGKPTLQLEMLDPRVYPKKKMEKRFVFNKTEIKETLEFESSQFPNWYISTSKAEAMPVFLGNTKGGQDITDFTMELSS.

Residues 1 to 118 (MATVPEPTSE…VYDDDAFVCD (118 aa)) constitute a propeptide that is removed on maturation.

Belongs to the IL-1 family. As to quaternary structure, monomer. In its precursor form, weakly interacts with full-length MEFV; the mature cytokine does not interact at all. Interacts with integrins ITGAV:ITGBV and ITGA5:ITGB1; integrin-binding is required for IL1B signaling. Interacts with cargo receptor TMED10; the interaction is direct and is required for the secretion of IL1B mature form. Interacts with HSP90AB1; the interaction facilitates cargo translocation into the ERGIC. Interacts with HSP90B1; the interaction facilitates cargo translocation into the ERGIC.

The protein resides in the cytoplasm. The protein localises to the cytosol. Its subcellular location is the secreted. It is found in the lysosome. It localises to the extracellular exosome. Functionally, potent pro-inflammatory cytokine. Initially discovered as the major endogenous pyrogen, induces prostaglandin synthesis, neutrophil influx and activation, T-cell activation and cytokine production, B-cell activation and antibody production, and fibroblast proliferation and collagen production. Promotes Th17 differentiation of T-cells. Synergizes with IL12/interleukin-12 to induce IFNG synthesis from T-helper 1 (Th1) cells. Plays a role in angiogenesis by inducing VEGF production synergistically with TNF and IL6. Involved in transduction of inflammation downstream of pyroptosis: its mature form is specifically released in the extracellular milieu by passing through the gasdermin-D (GSDMD) pore. This is Interleukin-1 beta (IL1B) from Eumetopias jubatus (Steller sea lion).